The primary structure comprises 359 residues: 3-dehydroquinate synthase (359 aa).

NAD(+) is bound by residues 71-76 (DGEAYK), 105-109 (GVIGD), 129-130 (TT), Lys-142, and Lys-151. Zn(2+) is bound by residues Glu-184, His-247, and His-264.

This sequence belongs to the sugar phosphate cyclases superfamily. Dehydroquinate synthase family. Requires Co(2+) as cofactor. It depends on Zn(2+) as a cofactor. The cofactor is NAD(+).

The protein localises to the cytoplasm. The catalysed reaction is 7-phospho-2-dehydro-3-deoxy-D-arabino-heptonate = 3-dehydroquinate + phosphate. It participates in metabolic intermediate biosynthesis; chorismate biosynthesis; chorismate from D-erythrose 4-phosphate and phosphoenolpyruvate: step 2/7. Catalyzes the conversion of 3-deoxy-D-arabino-heptulosonate 7-phosphate (DAHP) to dehydroquinate (DHQ). This is 3-dehydroquinate synthase from Burkholderia ambifaria (strain MC40-6).